Consider the following 183-residue polypeptide: Oligoribonuclease (183 aa).

In terms of domain architecture, Exonuclease spans 9–172 (LIWIDLEMTG…DDIRDSISEL (164 aa)). Residue Tyr-130 is part of the active site.

It belongs to the oligoribonuclease family.

The protein resides in the cytoplasm. Its function is as follows. 3'-to-5' exoribonuclease specific for small oligoribonucleotides. This Acinetobacter baylyi (strain ATCC 33305 / BD413 / ADP1) protein is Oligoribonuclease.